We begin with the raw amino-acid sequence, 60 residues long: Large ribosomal subunit protein bL32 (60 aa).

The protein belongs to the bacterial ribosomal protein bL32 family.

This chain is Large ribosomal subunit protein bL32, found in Clostridium perfringens (strain ATCC 13124 / DSM 756 / JCM 1290 / NCIMB 6125 / NCTC 8237 / Type A).